Here is a 119-residue protein sequence, read N- to C-terminus: Large ribosomal subunit protein bL20 (119 aa).

This sequence belongs to the bacterial ribosomal protein bL20 family.

Its function is as follows. Binds directly to 23S ribosomal RNA and is necessary for the in vitro assembly process of the 50S ribosomal subunit. It is not involved in the protein synthesizing functions of that subunit. This is Large ribosomal subunit protein bL20 from Rhodopseudomonas palustris (strain HaA2).